The following is a 961-amino-acid chain: G protein-coupled receptor GPR1 (961 aa).

The Extracellular segment spans residues 1–56 (MITEGFPPNLNALKGSSLLEKRVDSLRQLNTTTVNQLLGLPGMTSTFTAPQLLQLR). Residues 57–79 (IIAITASAVSLIAGCLGMFFLSK) traverse the membrane as a helical segment. At 80 to 91 (MDKRRKVFRHDL) the chain is on the cytoplasmic side. Residues 92–114 (IAFLIICDFLKAFILMIYPMIIL) form a helical membrane-spanning segment. Over 115-133 (INNSVYATPAFFNTLGWFT) the chain is Extracellular. Residues 134–156 (AFAIEGADMAIMIFAIHFAILIF) form a helical membrane-spanning segment. The Cytoplasmic portion of the chain corresponds to 157-178 (KPNWKWRNKRSGNMEGGLYKKR). The chain crosses the membrane as a helical span at residues 179–198 (SYIWPITALVPAILASLAFI). Topologically, residues 199-250 (NYNKLNDDSDTTIILDNNNYNFPDSPRQGGYKPWSAWCYLPPKPYWYKIVLS) are extracellular. Residues 251-273 (WGPRYFIIIFIFAVYLSIYIFIT) form a helical membrane-spanning segment. Over 274-619 (SESKRIKAQI…KKRRAQIQKN (346 aa)) the chain is Cytoplasmic. S373 is subject to Phosphoserine. A disordered region spans residues 468-568 (AMYDNKNDNS…PADNIPTLSN (101 aa)). Positions 502 to 558 (NNNNDNDNDNNNSNNNNNNNNNNNNNNNNNNNNNNNNNNNNNNSNNIKNNVDNNNTN) are enriched in low complexity. The chain crosses the membrane as a helical span at residues 620 to 642 (LRAIFIYPLSYIGIWLFPIIADA). Over 643–822 (LQYNHEIKHG…AMLNNITAEE (180 aa)) the chain is Extracellular. Basic and acidic residues predominate over residues 783 to 796 (DSNDNKRTESDETK). The disordered stretch occupies residues 783-805 (DSNDNKRTESDETKTNSSDRSLP). The chain crosses the membrane as a helical span at residues 823–843 (VEVPLFWRIIHHIPMLGGIDL). Over 844–961 (DELNRLLKIR…LIAFLRNGPL (118 aa)) the chain is Cytoplasmic. S903 carries the phosphoserine modification.

This sequence belongs to the G-protein coupled receptor GPR1/git3 family.

It is found in the cell membrane. Functionally, seems to associate with GPA2 and act as G protein-coupled receptor that senses glucose and controls filamentous growth. It acts upstream of adenylate cyclase and is required for glucose activation of cAMP synthesis in concert with a glucose phosphorylation-dependent mechanism. This chain is G protein-coupled receptor GPR1 (GPR1), found in Saccharomyces cerevisiae (strain ATCC 204508 / S288c) (Baker's yeast).